Reading from the N-terminus, the 652-residue chain is Forkhead box protein O1 (652 aa).

Disordered regions lie at residues 1–62 (MAEA…ASAS) and 112–154 (VHPA…SSRR). The residue at position 24 (Thr24) is a Phosphothreonine; by PKB/AKT1 or PKB/AKT2 and SGK1. Positions 35 to 62 (SNSTTSSPAPSGGAAANPDAAASLASAS) are enriched in low complexity. Positions 114–133 (PAPPQPPPTGPLSQPPPVPP) are enriched in pro residues. Positions 134-146 (SAAAAAGPLAGQP) are enriched in low complexity. Residues 156–232 (AWGNLSYADL…VQNEGTGKSS (77 aa)) constitute a DNA-binding region (fork-head). 2 DNA-binding regions span residues 208–215 (NSIRHNLS) and 231–234 (SSWW). Ser209 is subject to Phosphoserine; by STK4/MST1. Phosphoserine is present on residues Ser215, Ser231, and Ser232. Disordered regions lie at residues 231–342 (SSWW…DVHS) and 383–410 (SLTV…PNTS). An N6-acetyllysine mark is found at Lys242 and Lys245. Ser246 carries the post-translational modification Phosphoserine; by CDK1. Omega-N-methylarginine; by PRMT1 occurs at positions 248 and 250. Residues 248–250 (RRR) carry the Nuclear localization signal motif. Ser253 is subject to Phosphoserine; by PKB/AKT1 and SGK1. N6-acetyllysine occurs at positions 259, 262, and 271. The segment covering 261–272 (AKSRGRAAKKKA) has biased composition (basic residues). The sufficient for interaction with NLK stretch occupies residues 280 to 562 (GPGDSPGSQF…TPVKTPLQVP (283 aa)). Ser284 and Ser295 each carry phosphoserine. Positions 306–323 (NWSTFRPRTSSNASTISG) are enriched in polar residues. Ser316 is modified (phosphoserine; by PKB/AKT1 or PKB/AKT2). Ser319 bears the Phosphoserine; by CK1 and SGK1 mark. Ser322 is modified (phosphoserine; by CK1). Ser326 is modified (phosphoserine). A Phosphothreonine modification is found at Thr330. The segment at 360-456 (SEISNPENME…GGLNQYNCAP (97 aa)) is required for interaction with RUNX2. The span at 392–401 (PGSMMQQTPC) shows a compositional bias: polar residues. Residue Lys420 is modified to N6-acetyllysine. Positions 459–463 (LKELL) match the Required for interaction with SIRT1 motif.

As to quaternary structure, interacts with EP300 and CREBBP; the interactions acetylate FOXO1. Interacts with the 14-3-3 proteins, YWHAG and YWHAZ; the interactions require insulin-stimulated phosphorylation on Thr-24, promote nuclear exit and loss of transcriptional activity. Interacts with SKP2; the interaction ubiquitinates FOXO1 leading to its proteasomal degradation. Interacts with PMRT1; methylates FOXO1, prevents PKB/AKT1 phosphorylation and retains FOXO1 in the nucleus. Interacts (via an N-terminal domain) with FCOR; the interaction is direct, occurs in a forskolin-independent manner and prevents SIRT1 binding to FOXO1. Interacts (via the C-terminal half) with ATF4 (via its DNA-binding domain); the interaction occurs in osteoblasts, regulates glucose homeostasis via suppression of beta-cell proliferation and subsequent decrease in insulin production. Interacts with RUNX2; the interaction inhibits RUNX2 transcriptional activity and mediates the IGF1/insulin-dependent BGLAP expression in osteoblasts. Interacts with PPP2R1A; the interaction regulates the dephosphorylation of FOXO1 at Thr-24 and Ser-253 leading to its nuclear import. Binds to CDK1. Interacts with LRPPRC. Interacts with RUNX2; the interaction inhibits RUNX2 transcriptional activity and mediates the IGF1/insulin-dependent BGLAP expression in osteoblasts. Interacts with NLK. Interacts with SIRT1; the interaction results in the deacetylation of FOXO1 leading to activation of FOXO1-mediated transcription of genes involved in DNA repair and stress resistance. The interaction requires the presence of KRIT1 and is inhibited by FCOR. Interacts with SIRT2; the interaction is disrupted in response to oxidative stress or serum deprivation, leading to increased level of acetylated FOXO1, which promotes stress-induced autophagy by stimulating E1-like activating enzyme ATG7. Interacts (acetylated form) with ATG7; the interaction is increased in response to oxidative stress or serum deprivation and promotes the autophagic process leading to cell death. Interacts (acetylated form) with PPARG. Interacts with XBP1 isoform 2; this interaction is direct and leads to FOXO1 ubiquitination and degradation via the proteasome pathway. Interacts (via the Fork-head domain) with CEBPA; the interaction increases when FOXO1 is deacetylated. Interacts with WDFY2. Forms a complex with WDFY2 and AKT1. Interacts with CRY1. Interacts with PPIA/CYPA; the interaction promotes FOXO1 dephosphorylation, nuclear accumulation and transcriptional activity. Interacts with TOX4; FOXO1 is required for full induction of TOX4-dependent activity and the interaction is inhibited by insulin. Interacts (when phosphorylated on Ser-253) with STUB1/CHIP. Post-translationally, phosphorylation by NLK promotes nuclear export and inhibits the transcriptional activity. In response to growth factors, phosphorylation on Thr-24, Ser-253 and Ser-319 by PKB/AKT1 promotes nuclear export and inactivation of transactivational activity. Phosphorylation on Thr-24 is required for binding 14-3-3 proteins. Phosphorylation of Ser-253 decreases DNA-binding activity and promotes the phosphorylation of Thr-24 and Ser-316, permitting phosphorylation of Ser-319 and Ser-322, probably by CDK1, leading to nuclear exclusion and loss of function. Stress signals, such as response to oxygen or nitric oxide, attenuate the PKB/AKT1-mediated phosphorylation leading to nuclear retention. Phosphorylation of Ser-326 is independent of IGF1 and leads to reduced function. Dephosphorylated on Thr-24 and Ser-253 by PP2A in beta-cells under oxidative stress leading to nuclear retention. Phosphorylation of Ser-246 by CDK1 disrupts binding of 14-3-3 proteins leading to nuclear accumulation and has no effect on DNA-binding nor transcriptional activity. Phosphorylation by STK4/MST1 on Ser-209, upon oxidative stress, inhibits binding to 14-3-3 proteins and nuclear export. PPIA/CYPA promotes its dephosphorylation on Ser-253. Ubiquitinated by SKP2. Ubiquitinated, leading to proteasomal degradation. Ubiquitinated by STUB1/CHIP; when Ser-253 is phosphorylated. In terms of processing, methylation inhibits PKB/AKT1-mediated phosphorylation at Ser-253, promoting nuclear retention and increasing the transcriptional activity and cell death. Methylation increased by oxidative stress. Post-translationally, acetylation at Lys-259 and Lys-271 are necessary for autophagic cell death induction. Deacetylated by SIRT2 in response to oxidative stress or serum deprivation, thereby negatively regulating FOXO1-mediated autophagic cell death. Once in the nucleus, acetylated by CREBBP/EP300. Acetylation diminishes the interaction with target DNA and attenuates the transcriptional activity. It increases the phosphorylation at Ser-253, and is required for the transcriptional inhibition by FCOR. Deacetylation by SIRT1 results in reactivation of the transcriptional activity. Acetylation of FOXO1 diminishes its binding to PPARG in adipocytes. Deacetylated by SIRT2; deacetylation of FOXO1 directly increases its repressive binding to PPARG and inhibits adipocyte differentiation. Oxidative stress by hydrogen peroxide treatment appears to promote deacetylation and uncoupling of insulin-induced phosphorylation. By contrast, resveratrol acts independently of acetylation. Acetylated at Lys-420, promoting its localization to the nucleus and transcription factor activity. Deacetylation at Lys-420 by SIRT6, promotes its translocation into the cytoplasm, preventing its transcription factor activity. Deacetylation and subsequent inhibition by SIRT6 has different effects depending on cell types: it inhibits gluconeogenesis in hepatocytes, promotes glucose sensing in pancreatic beta-cells and regulates lipid catabolism in brown adipocytes. In terms of tissue distribution, expressed in liver, white and brown adipose tissues (at protein level).

The protein localises to the cytoplasm. It is found in the nucleus. In terms of biological role, transcription factor that is the main target of insulin signaling and regulates metabolic homeostasis in response to oxidative stress. Binds to the insulin response element (IRE) with consensus sequence 5'-TT[G/A]TTTTG-3' and the related Daf-16 family binding element (DBE) with consensus sequence 5'-TT[G/A]TTTAC-3'. Activity suppressed by insulin. Main regulator of redox balance and osteoblast numbers and controls bone mass. Orchestrates the endocrine function of the skeleton in regulating glucose metabolism. Also acts as a key regulator of chondrogenic commitment of skeletal progenitor cells in response to lipid availability: when lipids levels are low, translocates to the nucleus and promotes expression of SOX9, which induces chondrogenic commitment and suppresses fatty acid oxidation. Acts synergistically with ATF4 to suppress osteocalcin/BGLAP activity, increasing glucose levels and triggering glucose intolerance and insulin insensitivity. Also suppresses the transcriptional activity of RUNX2, an upstream activator of osteocalcin/BGLAP. Acts as an inhibitor of glucose sensing in pancreatic beta cells by acting as a transcription repressor and suppressing expression of PDX1. In hepatocytes, promotes gluconeogenesis by acting together with PPARGC1A and CEBPA to activate the expression of genes such as IGFBP1, G6PC1 and PCK1. Also promotes gluconeogenesis by directly promoting expression of PPARGC1A and G6PC1. Important regulator of cell death acting downstream of CDK1, PKB/AKT1 and STK4/MST1. Promotes neural cell death. Mediates insulin action on adipose tissue. Regulates the expression of adipogenic genes such as PPARG during preadipocyte differentiation and, adipocyte size and adipose tissue-specific gene expression in response to excessive calorie intake. Regulates the transcriptional activity of GADD45A and repair of nitric oxide-damaged DNA in beta-cells. Required for the autophagic cell death induction in response to starvation or oxidative stress in a transcription-independent manner. Mediates the function of MLIP in cardiomyocytes hypertrophy and cardiac remodeling. Positive regulator of apoptosis in cardiac smooth muscle cells as a result of its transcriptional activation of pro-apoptotic genes. Regulates endothelial cell (EC) viability and apoptosis in a PPIA/CYPA-dependent manner via transcription of CCL2 and BCL2L11 which are involved in EC chemotaxis and apoptosis. The polypeptide is Forkhead box protein O1 (Foxo1) (Mus musculus (Mouse)).